A 251-amino-acid chain; its full sequence is Cell division protein ZapD (251 aa).

This sequence belongs to the ZapD family. As to quaternary structure, interacts with FtsZ.

The protein resides in the cytoplasm. Cell division factor that enhances FtsZ-ring assembly. Directly interacts with FtsZ and promotes bundling of FtsZ protofilaments, with a reduction in FtsZ GTPase activity. The polypeptide is Cell division protein ZapD (Burkholderia ambifaria (strain MC40-6)).